The sequence spans 683 residues: MKTFCGRANPTTGALDWVEESEEYDYHQEIARSCYADMLHDKDRNEKYYEGIRAAVRRVKARGERPVVLDIGTGTGLLSMMAVTAGADFCYAIEVFKPMAQAASCIVERNGFSDKIKIINKHSTEVTVGPDGDMQERANILVTELFDTELIGEGALPSYEHAHMHLVQTGCEAVPHRATIYAQLVESDMLWKWAQMRPIDVDGHRLMPPGAVQECAGAPSVCDIQLSQVPTDAFTAISPVCTMFSVDFSKPVSSAAQSYTVRFKSQTGGRAQVVLSWWDIDMDPEGNIVCTMAPSWSYADPHAYPWRDHWMQSVYFLPAEENVSEGEELMLMVSHDDYSLWYSLTHSEQNDVRVAPFRPCCTCQAHLVWTRPRFGELNDEQRTESYVSALRSILKPDSVCLSVSDGSLLPVFAHLLGSKKVFSLESSGMAKQVIEQVLHTNSLKDGVQLLGIRAEQLSLADLDGNQISVLMGEPYFSTSLLPWHSLFFWYCRTAVAQLLQPDATILPRAATLYAVAVEFQDLWRIRFPCGTCEGFDVSPMDEMIQRSLDFRESWEAEPHPLWEYPCRALTKPCPVMTFDFTQCVPEQPISSDGAVPFTGRGRCHGVALWMEYQLTDDISVSMGLTKAVSQEGACEWNPHRKQGVFFFRSAKETSGDGREDLSYSLTFEPHSGDIKMDFSITES.

SAM-dependent MTase PRMT-type domains lie at 14 to 341 (ALDW…YSLW) and 353 to 677 (RVAP…IKMD). Active-site residues include Glu144 and Glu153.

Belongs to the class I-like SAM-binding methyltransferase superfamily. Protein arginine N-methyltransferase family. PRMT7 subfamily.

It is found in the cytoplasm. It localises to the cytosol. The protein resides in the nucleus. It catalyses the reaction L-arginyl-[protein] + S-adenosyl-L-methionine = N(omega)-methyl-L-arginyl-[protein] + S-adenosyl-L-homocysteine + H(+). Its function is as follows. Arginine methyltransferase that can both catalyze the formation of omega-N monomethylarginine (MMA) and symmetrical dimethylarginine (sDMA), with a preference for the formation of MMA. Specifically mediates the symmetrical dimethylation of arginine residues in the small nuclear ribonucleoproteins Sm D1 (SNRPD1) and Sm D3 (SNRPD3); such methylation being required for the assembly and biogenesis of snRNP core particles. Specifically mediates the symmetric dimethylation of histone H4 'Arg-3' to form H4R3me2s. Plays a role in gene imprinting by being recruited by CTCFL at the H19 imprinted control region (ICR) and methylating histone H4 to form H4R3me2s, possibly leading to recruit DNA methyltransferases at these sites. May also play a role in embryonic stem cell (ESC) pluripotency. Also able to mediate the arginine methylation of histone H2A and myelin basic protein (MBP) in vitro; the relevance of such results is however unclear in vivo. This is Protein arginine N-methyltransferase 7 (prmt7) from Danio rerio (Zebrafish).